The following is a 98-amino-acid chain: NADH-ubiquinone oxidoreductase chain 4L (98 aa).

A run of 3 helical transmembrane segments spans residues 1-21 (MPIIYMNIMLSFIISLLGMLI), 29-49 (SLLCLEGMMLSLFIMSTLMAL), and 58-78 (IVPVALLVFAACEAAVGLALL).

It belongs to the complex I subunit 4L family. Core subunit of respiratory chain NADH dehydrogenase (Complex I) which is composed of 45 different subunits.

It is found in the mitochondrion inner membrane. It carries out the reaction a ubiquinone + NADH + 5 H(+)(in) = a ubiquinol + NAD(+) + 4 H(+)(out). Its function is as follows. Core subunit of the mitochondrial membrane respiratory chain NADH dehydrogenase (Complex I) which catalyzes electron transfer from NADH through the respiratory chain, using ubiquinone as an electron acceptor. Part of the enzyme membrane arm which is embedded in the lipid bilayer and involved in proton translocation. This is NADH-ubiquinone oxidoreductase chain 4L (MT-ND4L) from Semnopithecus entellus (Northern plains gray langur).